Reading from the N-terminus, the 397-residue chain is Transcription factor xenB (397 aa).

Residues 220–249 (TISDFETGDRQTISRSDTNSEVRPIPESPS) are disordered. The span at 229–240 (RQTISRSDTNSE) shows a compositional bias: polar residues.

In terms of biological role, transcription factor; part of the gene cluster that mediates the biosynthesis of xenoacremones such as xenoacremone A, a compound that shows inhibitory activity toward the PI3K/AKT signaling pathway and which has the ability to induce apoptosis of A549 lung cancer cells. Acts as a positive regulator of the xenoacremones biosynthesis gene cluster. The protein is Transcription factor xenB of Xenoacremonium sinensis (Endophyte fungus).